The following is a 109-amino-acid chain: Class I hydrophobin G (109 aa).

An N-terminal signal peptide occupies residues 1 to 19 (MRLSILSVFSLVGAGMVSA). Intrachain disulfides connect Cys-36-Cys-90, Cys-42-Cys-84, Cys-43-Cys-76, and Cys-91-Cys-105.

This sequence belongs to the fungal hydrophobin family.

It localises to the secreted. Its subcellular location is the cell wall. Its function is as follows. Aerial growth, conidiation, and dispersal of filamentous fungi in the environment rely upon a capability of their secreting small amphipathic proteins called hydrophobins (HPBs) with low sequence identity. Class I can self-assemble into an outermost layer of rodlet bundles on aerial cell surfaces, conferring cellular hydrophobicity that supports fungal growth, development and dispersal; whereas Class II form highly ordered films at water-air interfaces through intermolecular interactions but contribute nothing to the rodlet structure. In P.expansum, hydrophobins contribute to germination, tolerance to cold stress and mycotoxins patulin and citrinin production. The chain is Class I hydrophobin G from Penicillium expansum (Blue mold rot fungus).